The following is a 316-amino-acid chain: MYGEILSFFYITFFILVLPTQIFGIFVILRFSTKHLKLWKKFLLCNLICQIISVATLCLLQLRQVSNLSPMEIWCYGPIRHFSAITSYLFYVLSQISTLMTYFLVFITIYLKYEAVKNVNKQNYRKVVIILMLLLPIFITMVAQIDLMIVFFSPNEAQKKFNELNAIITDHSVIGYVISGRISSFLLTVIIFGSVFLLPPAGFFIRKKIIRCINSTSDSASVGQKFQRRSFINGLTLQSFLPLVCICPIFACYFVVSRTKTDLPFEQHILPVLVMLPTLFDPYIILYSVTPYRKQIRTWLGMTKTVPMVIVASVMI.

A run of 7 helical transmembrane segments spans residues 8-28 (FFYI…IFVI), 42-62 (FLLC…LLQL), 89-109 (LFYV…FITI), 127-147 (VVII…QIDL), 185-205 (FLLT…GFFI), 236-256 (TLQS…YFVV), and 269-289 (ILPV…LYSV).

Belongs to the nematode receptor-like protein srd family.

It localises to the membrane. This chain is Serpentine receptor class delta-48 (srd-48), found in Caenorhabditis elegans.